Here is a 134-residue protein sequence, read N- to C-terminus: MIVGIGSDLIDIRRVEKTLERHGSRFRDRVFTEIEQRKSEGRKQRAASYAKRFAAKEACAKALGTGIAEGVFWRDMGVVNTPSGKPTMHLTGGAAKQLQKLLPAGTNAAIHLTITDDFPLAQAFVIIEALPVLE.

The Mg(2+) site is built by Asp-8 and Glu-57.

It belongs to the P-Pant transferase superfamily. AcpS family. The cofactor is Mg(2+).

Its subcellular location is the cytoplasm. The catalysed reaction is apo-[ACP] + CoA = holo-[ACP] + adenosine 3',5'-bisphosphate + H(+). In terms of biological role, transfers the 4'-phosphopantetheine moiety from coenzyme A to a Ser of acyl-carrier-protein. In Brucella abortus (strain S19), this protein is Holo-[acyl-carrier-protein] synthase.